The following is a 548-amino-acid chain: Glucose-6-phosphate isomerase (548 aa).

Residue Glu355 is the Proton donor of the active site. Residues His386 and Lys514 contribute to the active site.

It belongs to the GPI family.

It localises to the cytoplasm. It carries out the reaction alpha-D-glucose 6-phosphate = beta-D-fructose 6-phosphate. It functions in the pathway carbohydrate biosynthesis; gluconeogenesis. It participates in carbohydrate degradation; glycolysis; D-glyceraldehyde 3-phosphate and glycerone phosphate from D-glucose: step 2/4. Its function is as follows. Catalyzes the reversible isomerization of glucose-6-phosphate to fructose-6-phosphate. The protein is Glucose-6-phosphate isomerase of Yersinia enterocolitica serotype O:8 / biotype 1B (strain NCTC 13174 / 8081).